Here is a 313-residue protein sequence, read N- to C-terminus: Ribosomal RNA small subunit methyltransferase H (313 aa).

S-adenosyl-L-methionine is bound by residues 36-38, D56, F80, D102, and Q109; that span reads GGH.

It belongs to the methyltransferase superfamily. RsmH family.

It localises to the cytoplasm. The enzyme catalyses cytidine(1402) in 16S rRNA + S-adenosyl-L-methionine = N(4)-methylcytidine(1402) in 16S rRNA + S-adenosyl-L-homocysteine + H(+). Functionally, specifically methylates the N4 position of cytidine in position 1402 (C1402) of 16S rRNA. The protein is Ribosomal RNA small subunit methyltransferase H of Haemophilus ducreyi (strain 35000HP / ATCC 700724).